We begin with the raw amino-acid sequence, 836 residues long: Taste receptor type 1 member 2 (836 aa).

Residues 1-19 (MGPRAKAVCSLFILLQVLA) form the signal peptide. The Extracellular segment spans residues 20–565 (EPAENSDFYL…AFLEWHEPST (546 aa)). Residues Asn-84, Asn-292, Asn-312, Asn-351, Asn-427, Asn-479, Asn-486, Asn-526, and Asn-546 are each glycosylated (N-linked (GlcNAc...) asparagine). A helical transmembrane segment spans residues 566–586 (IFVVMLTILGFLSTLAIMVIF). At 587–601 (WRHLHTPVVRSAGGP) the chain is on the cytoplasmic side. Residues 602–622 (MCFLMLVPLLLAYAMVPMYIG) traverse the membrane as a helical segment. Residues 623–634 (QPTFFSCLWRQT) are Extracellular-facing. A helical transmembrane segment spans residues 635 to 655 (FFTLCFTICISCITVRSFQIV). At 656 to 680 (CIFKMARRLPRAYGYWVRCHGPYVF) the chain is on the cytoplasmic side. Residues 681–701 (VASFMVLKVVIVAGNVLATTA) traverse the membrane as a helical segment. Topologically, residues 702 to 724 (NPTARPDPDDPNIMVLSCNYRRA) are extracellular. The helical transmembrane segment at 725 to 745 (LLFNTSLDLLLSVAGFSFAYM) threads the bilayer. The Cytoplasmic portion of the chain corresponds to 746-757 (GKELPTNYNEAK). A helical membrane pass occupies residues 758–778 (FITLCMTFYFTSSVSLCTFMS). Residues 779-781 (VYD) are Extracellular-facing. Residues 782–802 (GVLVTILDLLITVLNLLGISF) traverse the membrane as a helical segment. Topologically, residues 803–836 (GYFGPKCYMVLFYPERNTQVYFSSMIQGYTMGKD) are cytoplasmic.

The protein belongs to the G-protein coupled receptor 3 family. TAS1R subfamily. Forms heterodimers with TAS1R3.

It is found in the cell membrane. Putative taste receptor. TAS1R2/TAS1R3 recognizes diverse natural and synthetic sweeteners. The polypeptide is Taste receptor type 1 member 2 (TAS1R2) (Canis lupus familiaris (Dog)).